A 517-amino-acid chain; its full sequence is ATP synthase subunit beta (517 aa).

Low complexity-rich tracts occupy residues 1 to 22 (MAKA…AAKA) and 29 to 42 (AKTA…APKA). The segment at 1–42 (MAKAATPKTTAAAEAKPAAAKAPAKKAPAKTAAAKSDAAPKA) is disordered. 195–202 (GGAGVGKT) serves as a coordination point for ATP.

This sequence belongs to the ATPase alpha/beta chains family. As to quaternary structure, F-type ATPases have 2 components, CF(1) - the catalytic core - and CF(0) - the membrane proton channel. CF(1) has five subunits: alpha(3), beta(3), gamma(1), delta(1), epsilon(1). CF(0) has three main subunits: a(1), b(2) and c(9-12). The alpha and beta chains form an alternating ring which encloses part of the gamma chain. CF(1) is attached to CF(0) by a central stalk formed by the gamma and epsilon chains, while a peripheral stalk is formed by the delta and b chains.

It is found in the cell inner membrane. It catalyses the reaction ATP + H2O + 4 H(+)(in) = ADP + phosphate + 5 H(+)(out). Functionally, produces ATP from ADP in the presence of a proton gradient across the membrane. The catalytic sites are hosted primarily by the beta subunits. This chain is ATP synthase subunit beta, found in Brucella anthropi (strain ATCC 49188 / DSM 6882 / CCUG 24695 / JCM 21032 / LMG 3331 / NBRC 15819 / NCTC 12168 / Alc 37) (Ochrobactrum anthropi).